The following is a 432-amino-acid chain: Glutamyl-tRNA reductase (432 aa).

Substrate is bound by residues 49 to 52 (TCNR), Ser107, 112 to 114 (ETQ), and Gln118. Residue Cys50 is the Nucleophile of the active site. 186 to 191 (GAGEMG) serves as a coordination point for NADP(+).

The protein belongs to the glutamyl-tRNA reductase family. Homodimer.

The catalysed reaction is (S)-4-amino-5-oxopentanoate + tRNA(Glu) + NADP(+) = L-glutamyl-tRNA(Glu) + NADPH + H(+). Its pathway is porphyrin-containing compound metabolism; protoporphyrin-IX biosynthesis; 5-aminolevulinate from L-glutamyl-tRNA(Glu): step 1/2. Its function is as follows. Catalyzes the NADPH-dependent reduction of glutamyl-tRNA(Glu) to glutamate 1-semialdehyde (GSA). In Campylobacter jejuni subsp. jejuni serotype O:6 (strain 81116 / NCTC 11828), this protein is Glutamyl-tRNA reductase.